The primary structure comprises 158 residues: uncharacterized protein (158 aa).

This is an uncharacterized protein from Archaeoglobus fulgidus (strain ATCC 49558 / DSM 4304 / JCM 9628 / NBRC 100126 / VC-16).